The primary structure comprises 247 residues: 2-amino-5-formylamino-6-ribosylaminopyrimidin-4(3H)-one 5'-monophosphate deformylase (247 aa).

E41, H43, D52, and H121 together coordinate Fe cation.

Belongs to the creatininase superfamily. FAPy deformylase family. Homodimer. The cofactor is Fe(2+). It depends on Zn(2+) as a cofactor.

It carries out the reaction 2-amino-5-formylamino-6-(5-phospho-D-ribosylamino)pyrimidin-4(3H)-one + H2O = 2,5-diamino-6-(1-D-ribosylamino)pyrimidin-4(3H)-one 5'-phosphate + formate + H(+). The protein operates within cofactor biosynthesis; coenzyme F420 biosynthesis. It functions in the pathway cofactor biosynthesis; riboflavin biosynthesis. In terms of biological role, catalyzes the hydrolysis of the formamide of 2-amino-5-formylamino-6-ribosylamino-4(3H)-pyrimidinone 5'-monophosphate (FAPy) to form 2,5-diamino-6-ribosylamino-4(3H)-pyrimidinone 5'-phosphate (APy). The chain is 2-amino-5-formylamino-6-ribosylaminopyrimidin-4(3H)-one 5'-monophosphate deformylase from Methanothermus fervidus (strain ATCC 43054 / DSM 2088 / JCM 10308 / V24 S).